Consider the following 334-residue polypeptide: Cyclin N-terminal domain-containing protein 1 (334 aa).

Residues 29-180 (NALLHLAQQN…ILKSLNFQIN (152 aa)) form the Cyclin N-terminal domain.

Interacts with PRR19; this interaction promotes crossover formation. Interacts with RFC3 and RFC4; these interactions facilitate crossover formation. Interacts with CDC34; this interaction regulates the cell-cycle progression. In terms of tissue distribution, isoform 2 is expressed in spermatocyte.

The protein localises to the nucleus. It is found in the cytoplasm. It localises to the chromosome. Plays a role in the different steps of crossover formation during meiotic recombination. Participates in the crossover differentiation step of crossover-specific recombination intermediates through its interaction with PRR19. In addition, stimulates crossover formation through the interactions with RFC3 and RFC4 and simultaneously regulates cell-cycle progression through interactions with CDC34 and subsequent ubiquitination of WEE1. May also participates in an active deselection process that destabilizes or removes excess pre-CO intermediates. In Mus musculus (Mouse), this protein is Cyclin N-terminal domain-containing protein 1.